The following is a 36-amino-acid chain: Photosystem I reaction center subunit VIII (36 aa).

The chain crosses the membrane as a helical span at residues 4-24 (FSLPSILVPLVGLVLPAIAMA).

Belongs to the PsaI family.

It localises to the plastid. Its subcellular location is the chloroplast thylakoid membrane. Its function is as follows. May help in the organization of the PsaL subunit. The chain is Photosystem I reaction center subunit VIII from Piper cenocladum (Ant piper).